Here is a 132-residue protein sequence, read N- to C-terminus: MIRFFAFVLFFATQELILCNNLPCDASDIAYEEITTQAGTQTNTFCDCQTETYKFSTGTSTDKQTTTVKYKCKKIRACVYAQKCGSLDVKPEENVLSTFCTCADGQVCHDTPEYADETRTFGDTKYHSFVCT.

An N-terminal signal peptide occupies residues 1–19 (MIRFFAFVLFFATQELILC).

The protein belongs to the scoloptoxin-11 family. Post-translationally, contains 5 disulfide bonds. Expressed by the venom gland.

It is found in the secreted. The sequence is that of U-scoloptoxin(11)-Sa1a from Scolopendra alternans (Florida Keys giant centipede).